We begin with the raw amino-acid sequence, 275 residues long: Urease accessory protein UreD (275 aa).

This sequence belongs to the UreD family. As to quaternary structure, ureD, UreF and UreG form a complex that acts as a GTP-hydrolysis-dependent molecular chaperone, activating the urease apoprotein by helping to assemble the nickel containing metallocenter of UreC. The UreE protein probably delivers the nickel.

It is found in the cytoplasm. Required for maturation of urease via the functional incorporation of the urease nickel metallocenter. This chain is Urease accessory protein UreD, found in Cereibacter sphaeroides (strain ATCC 17029 / ATH 2.4.9) (Rhodobacter sphaeroides).